The sequence spans 212 residues: MFLDELISEFDRGLRSMTGVSRMSRPLPVPQESAVTEAAPELSPAERAHSAGLMRVNHVGEVCAQALYQAQKLATRSPSLRAVFNHAAIEEEDHLAWTAKRLEALDSRPSLLNPLWYTGALAIGLAAGRMGDRVSLGFMAETERQVEQHLDSHLEQLPEADRESRAIVEQMRVDEVEHGKAAMEAGGIELPFPVRGLMRAVSKVMTRTAYYI.

The tract at residues 21–42 (SRMSRPLPVPQESAVTEAAPEL) is disordered. Fe cation contacts are provided by E61, E91, H94, E143, E175, and H178.

The protein belongs to the COQ7 family. It depends on Fe cation as a cofactor.

It localises to the cell membrane. It carries out the reaction a 5-methoxy-2-methyl-3-(all-trans-polyprenyl)benzene-1,4-diol + AH2 + O2 = a 3-demethylubiquinol + A + H2O. It participates in cofactor biosynthesis; ubiquinone biosynthesis. In terms of biological role, catalyzes the hydroxylation of 2-nonaprenyl-3-methyl-6-methoxy-1,4-benzoquinol during ubiquinone biosynthesis. This chain is 3-demethoxyubiquinol 3-hydroxylase, found in Paraburkholderia xenovorans (strain LB400).